Here is a 444-residue protein sequence, read N- to C-terminus: Probable glycine dehydrogenase (decarboxylating) subunit 1 (444 aa).

The protein belongs to the GcvP family. N-terminal subunit subfamily. The glycine cleavage system is composed of four proteins: P, T, L and H. In this organism, the P 'protein' is a heterodimer of two subunits.

It catalyses the reaction N(6)-[(R)-lipoyl]-L-lysyl-[glycine-cleavage complex H protein] + glycine + H(+) = N(6)-[(R)-S(8)-aminomethyldihydrolipoyl]-L-lysyl-[glycine-cleavage complex H protein] + CO2. In terms of biological role, the glycine cleavage system catalyzes the degradation of glycine. The P protein binds the alpha-amino group of glycine through its pyridoxal phosphate cofactor; CO(2) is released and the remaining methylamine moiety is then transferred to the lipoamide cofactor of the H protein. This is Probable glycine dehydrogenase (decarboxylating) subunit 1 from Carboxydothermus hydrogenoformans (strain ATCC BAA-161 / DSM 6008 / Z-2901).